A 536-amino-acid chain; its full sequence is Coilin (536 aa).

A disordered region spans residues 96-316 (AETCNDGAQN…QHSQSPTSDS (221 aa)). A compositionally biased stretch (basic residues) spans 171–180 (KTHKGKRTKK). A compositionally biased stretch (basic and acidic residues) spans 181-192 (KSEAPIENPPDK). Positions 213 to 238 (QTSSSDSSDTSSCSDQPTPTTQQKPQ) are enriched in low complexity. Polar residues-rich tracts occupy residues 239-257 (SSAK…THSV) and 303-316 (THIQ…TSDS). 2 repeat units span residues 353–358 (RGRGRG) and 380–385 (RGRGRG). The 2 X 6 AA repeats of R-G-R-G-R-G stretch occupies residues 353–385 (RGRGRGEDFSWRGQRGRWFRGQGNNSNRGRGRG). Residues 368 to 387 (GRWFRGQGNNSNRGRGRGDS) form a disordered region. The segment covering 371–380 (FRGQGNNSNR) has biased composition (low complexity). The region spanning 425–523 (DYSSLPLLAA…VMLNWNTLIE (99 aa)) is the Tudor; atypical domain.

The protein belongs to the coilin family. In terms of tissue distribution, expressed in both oocytes and somatic cells.

The protein resides in the nucleus. The sequence is that of Coilin (coil) from Xenopus laevis (African clawed frog).